Consider the following 709-residue polypeptide: RxLR effector protein PITG_15110 (709 aa).

Positions 1 to 18 (MHAYSAAVLMGLLMVAEG) are cleaved as a signal peptide. Residues 51 to 66 (RLLREPETTEASNEDR) carry the RxLR-dEER motif.

It belongs to the RxLR effector family.

Its subcellular location is the secreted. It is found in the host cytoplasm. It localises to the host cytoskeleton. Its function is as follows. Effector that enhances P.infestans colonization of Nicotiana benthamiana leaves. This Phytophthora infestans (strain T30-4) (Potato late blight agent) protein is RxLR effector protein PITG_15110.